A 658-amino-acid chain; its full sequence is MIELVFPDGSKREFPDGVTGREIAAGISKSLEKKAILVEVDGELLDLERPLEKGGAFKILTREAPEALETIRHDVSHILAEAVQELFPGTQVTIGPAIEDGFYYDFAREEPFSLDDLAKIEQRMKEIVDRDEPIRREEWDRDEAIRHFREIGEEYKAQIIEAIPAGEKITVYRQGQWKDLCRGPHLPSTRHAGKAFKLTKLAGAYWRGDHRNAQLQRIYGTAWASEADLEAYIQRLEEAEKRDHRKLGRQMDLFHMQEEGKGMVFWHEKGLTLWRTVESYVRRRLDEAGYQEVRTPQVLDRVFWEKSGHWDKYRPNMFVCETEEGEELSLKPMNCPGHVQIFKFGQKSYRDLPLRMAEFGACHRYEPSGALHGLMRVRAFTQDDAHIFCREDQIEEETARFIELANSIHADFGLERDHIALATRPEVRAGSDEFWDKAEAQMLAAARKAGVEPVIAEGDGAFYAPKLDWVLKDSIGRTWTCGTIQLDYVLPERLGAEYVAEDGSKQRPVMLHRAICGSLERFIGVLIENYAGAFPLWLAPVQVVVATITSDADDYARAAAAELKAKGLRVELDLRNEKINYKVREHSLAKVPVIAVVGRREAEEGKVALRRLGSDGQQILALGEAAEALAMEALPPDLARKRQDGGVQAGLGGEREAG.

Positions 1 to 61 (MIELVFPDGS…EKGGAFKILT (61 aa)) constitute a TGS domain. A catalytic region spans residues 243-535 (DHRKLGRQMD…LIENYAGAFP (293 aa)). Positions 335, 386, and 512 each coordinate Zn(2+).

This sequence belongs to the class-II aminoacyl-tRNA synthetase family. As to quaternary structure, homodimer. Requires Zn(2+) as cofactor.

The protein localises to the cytoplasm. It carries out the reaction tRNA(Thr) + L-threonine + ATP = L-threonyl-tRNA(Thr) + AMP + diphosphate + H(+). Its function is as follows. Catalyzes the attachment of threonine to tRNA(Thr) in a two-step reaction: L-threonine is first activated by ATP to form Thr-AMP and then transferred to the acceptor end of tRNA(Thr). Also edits incorrectly charged L-seryl-tRNA(Thr). The sequence is that of Threonine--tRNA ligase from Phenylobacterium zucineum (strain HLK1).